We begin with the raw amino-acid sequence, 177 residues long: NAD(P)H-quinone oxidoreductase subunit 6, chloroplastic (177 aa).

A run of 5 helical transmembrane segments spans residues 10 to 30 (ILVV…VLFT), 33 to 53 (IYSA…YILL), 61 to 81 (AQLL…VMFM), 92 to 112 (LWTV…FLLI), and 152 to 172 (FFLP…GAIS).

Belongs to the complex I subunit 6 family. As to quaternary structure, NDH is composed of at least 16 different subunits, 5 of which are encoded in the nucleus.

It localises to the plastid. It is found in the chloroplast thylakoid membrane. It carries out the reaction a plastoquinone + NADH + (n+1) H(+)(in) = a plastoquinol + NAD(+) + n H(+)(out). The catalysed reaction is a plastoquinone + NADPH + (n+1) H(+)(in) = a plastoquinol + NADP(+) + n H(+)(out). NDH shuttles electrons from NAD(P)H:plastoquinone, via FMN and iron-sulfur (Fe-S) centers, to quinones in the photosynthetic chain and possibly in a chloroplast respiratory chain. The immediate electron acceptor for the enzyme in this species is believed to be plastoquinone. Couples the redox reaction to proton translocation, and thus conserves the redox energy in a proton gradient. This is NAD(P)H-quinone oxidoreductase subunit 6, chloroplastic (ndhG) from Lemna minor (Common duckweed).